The chain runs to 477 residues: MQVLHVCSEMFPLLKTGGLADVIGALPAAQIADGVDARVLLPAFPDIRRGIPDAQVVTRRDTFAGRITLLFGHYNGVGIYLIDAPHLYDRPGSPYHDTNLFAYTDNVLRFALLGWVGCEMACGLDPFWRPDVVHAHDWHAGLAPAYLAARGRPAKSVFTVHNLAYQGMFYAHHMDDIQLPWSFYNMHGLEFNGQISFLKAGLYYADHITAVSPTYAREITEPQFAYGMEGLLRQRHQEGRLSGVLNGVDEKIWSPETDLLLAARYTRDSLEEKAENKRQLQIAMGLKVDDKAPLFAVVSRLTSQKGLDLVLEALPGLLEQGGQLALLGAGDPVLQEGFLAAAAEHPGQVGVQIGYHEAFSHRIMGGADVILVPSRFEPCGLTQLYGLKYGTLPLVRRTGGLADTVSDSSLENLADGIASGFVFEDSNAWSLLRAIRRAFVLWSRPSLWRFVQRQAMAMDFSWQVAAKSYRELYYRLK.

Lys-15 serves as a coordination point for ADP-alpha-D-glucose.

This sequence belongs to the glycosyltransferase 1 family. Bacterial/plant glycogen synthase subfamily.

It carries out the reaction [(1-&gt;4)-alpha-D-glucosyl](n) + ADP-alpha-D-glucose = [(1-&gt;4)-alpha-D-glucosyl](n+1) + ADP + H(+). It participates in glycan biosynthesis; glycogen biosynthesis. Synthesizes alpha-1,4-glucan chains using ADP-glucose. This is Glycogen synthase from Citrobacter koseri (strain ATCC BAA-895 / CDC 4225-83 / SGSC4696).